A 549-amino-acid chain; its full sequence is Glucose-6-phosphate isomerase (549 aa).

Catalysis depends on Glu-353, which acts as the Proton donor. Active-site residues include His-384 and Lys-512.

The protein belongs to the GPI family.

The protein localises to the cytoplasm. It catalyses the reaction alpha-D-glucose 6-phosphate = beta-D-fructose 6-phosphate. It participates in carbohydrate biosynthesis; gluconeogenesis. The protein operates within carbohydrate degradation; glycolysis; D-glyceraldehyde 3-phosphate and glycerone phosphate from D-glucose: step 2/4. In terms of biological role, catalyzes the reversible isomerization of glucose-6-phosphate to fructose-6-phosphate. The protein is Glucose-6-phosphate isomerase of Alteromonas mediterranea (strain DSM 17117 / CIP 110805 / LMG 28347 / Deep ecotype).